The chain runs to 207 residues: Fibroblast growth factor 18 (207 aa).

A signal peptide spans 1–27; sequence MYSAPSACTCLCLHFLLLCFQVQVLAA. The N-linked (GlcNAc...) asparagine glycan is linked to Asn39. Cys109 and Cys127 are oxidised to a cystine. The N-linked (GlcNAc...) asparagine glycan is linked to Asn137. The interval 157-183 is disordered; the sequence is GRPRKGPKTRENQQDVHFMKRYPKGQT. The segment covering 164–174 has biased composition (basic and acidic residues); that stretch reads KTRENQQDVHF.

The protein belongs to the heparin-binding growth factors family. Interacts with FGFR3 and FGFR4. Mainly expressed in the lung. Not detected in brain, heart, liver, kidney and small intestine.

It is found in the secreted. Plays an important role in the regulation of cell proliferation, cell differentiation and cell migration. Required for normal ossification and bone development. Stimulates hepatic and intestinal proliferation. In Rattus norvegicus (Rat), this protein is Fibroblast growth factor 18 (Fgf18).